Consider the following 299-residue polypeptide: ATP phosphoribosyltransferase (299 aa).

Belongs to the ATP phosphoribosyltransferase family. Long subfamily. Mg(2+) is required as a cofactor.

Its subcellular location is the cytoplasm. The catalysed reaction is 1-(5-phospho-beta-D-ribosyl)-ATP + diphosphate = 5-phospho-alpha-D-ribose 1-diphosphate + ATP. It participates in amino-acid biosynthesis; L-histidine biosynthesis; L-histidine from 5-phospho-alpha-D-ribose 1-diphosphate: step 1/9. With respect to regulation, feedback inhibited by histidine. Its function is as follows. Catalyzes the condensation of ATP and 5-phosphoribose 1-diphosphate to form N'-(5'-phosphoribosyl)-ATP (PR-ATP). Has a crucial role in the pathway because the rate of histidine biosynthesis seems to be controlled primarily by regulation of HisG enzymatic activity. The protein is ATP phosphoribosyltransferase of Shewanella halifaxensis (strain HAW-EB4).